An 83-amino-acid chain; its full sequence is Cytochrome b559 subunit alpha (83 aa).

A helical membrane pass occupies residues Val-21–Trp-35. His-23 is a heme binding site.

This sequence belongs to the PsbE/PsbF family. As to quaternary structure, heterodimer of an alpha subunit and a beta subunit. PSII is composed of 1 copy each of membrane proteins PsbA, PsbB, PsbC, PsbD, PsbE, PsbF, PsbH, PsbI, PsbJ, PsbK, PsbL, PsbM, PsbT, PsbX, PsbY, PsbZ, Psb30/Ycf12, at least 3 peripheral proteins of the oxygen-evolving complex and a large number of cofactors. It forms dimeric complexes. It depends on heme b as a cofactor.

The protein localises to the plastid. The protein resides in the chloroplast thylakoid membrane. In terms of biological role, this b-type cytochrome is tightly associated with the reaction center of photosystem II (PSII). PSII is a light-driven water:plastoquinone oxidoreductase that uses light energy to abstract electrons from H(2)O, generating O(2) and a proton gradient subsequently used for ATP formation. It consists of a core antenna complex that captures photons, and an electron transfer chain that converts photonic excitation into a charge separation. This is Cytochrome b559 subunit alpha from Mesembryanthemum crystallinum (Common ice plant).